A 339-amino-acid chain; its full sequence is DNA-directed RNA polymerase subunit alpha (339 aa).

An alpha N-terminal domain (alpha-NTD) region spans residues 1–235 (MVIQRNWQSL…DQLQLFINFE (235 aa)). The alpha C-terminal domain (alpha-CTD) stretch occupies residues 251-339 (FNRNLLRKVD…DLAKRLEEPF (89 aa)).

Belongs to the RNA polymerase alpha chain family. In terms of assembly, homodimer. The RNAP catalytic core consists of 2 alpha, 1 beta, 1 beta' and 1 omega subunit. When a sigma factor is associated with the core the holoenzyme is formed, which can initiate transcription.

The catalysed reaction is RNA(n) + a ribonucleoside 5'-triphosphate = RNA(n+1) + diphosphate. Functionally, DNA-dependent RNA polymerase catalyzes the transcription of DNA into RNA using the four ribonucleoside triphosphates as substrates. The sequence is that of DNA-directed RNA polymerase subunit alpha from Granulibacter bethesdensis (strain ATCC BAA-1260 / CGDNIH1).